A 55-amino-acid polypeptide reads, in one-letter code: Accessory gland-specific peptide 70A (55 aa).

Residues 1–19 (MKTLALFLVLVCVLGLVQS) form the signal peptide. Residues 20 to 33 (WEWPWNRKPTKFPI) are essential for binding to sperm. Hydroxyproline occurs at positions 28 and 32. I33 carries the isoleucine derivative modification. A hydroxyproline mark is found at P34, P36, and P38. The segment at 36 to 55 (PNPRDKWCRLNLGPAWGGRC) is sufficient to induce PMR. C43 and C55 are joined by a disulfide.

The protein belongs to the Drosophila sex peptide family. Post-translationally, sperm-bound protein is cleaved to release an active C-terminal peptide. Gradual release from stored sperm may function to prolong PMR and enhance male reproductive success. Main cells of the accessory glands of males (paragonial gland).

It is found in the secreted. Male seminal protein which triggers short- and long-term post-mating behavioral responses (PMR) in female Drosophila. Binds initially to sperm where it is later cleaved to release an active peptide within the female reproductive tract. Signals via the sex peptide receptor (SPR) in female flies; may also act via other receptors. Moderates the activity of distinct neuronal circuitries in the female genital tract to promote specific PMRs including: enhanced ovulation, increased egg laying rate, increased feeding/foraging rate, induced antimicrobial peptide synthesis, reduced mating receptivity, reduced day-time sleep and reduced lifespan in multiple mated females. The polypeptide is Accessory gland-specific peptide 70A (SP) (Drosophila melanogaster (Fruit fly)).